The chain runs to 333 residues: Ornithine carbamoyltransferase (333 aa).

Residues 56 to 59, Gln83, Arg107, and 134 to 137 contribute to the carbamoyl phosphate site; these read STRT and HPTQ. Residues Asn167, Asp231, and 235–236 contribute to the L-ornithine site; that span reads SM. Residues 273 to 274 and Arg318 each bind carbamoyl phosphate; that span reads CL.

This sequence belongs to the aspartate/ornithine carbamoyltransferase superfamily. OTCase family.

The protein resides in the cytoplasm. The enzyme catalyses carbamoyl phosphate + L-ornithine = L-citrulline + phosphate + H(+). The protein operates within amino-acid biosynthesis; L-arginine biosynthesis; L-arginine from L-ornithine and carbamoyl phosphate: step 1/3. In terms of biological role, has vitronectin and fibronectin-binding activity. Its function is as follows. Reversibly catalyzes the transfer of the carbamoyl group from carbamoyl phosphate (CP) to the N(epsilon) atom of ornithine (ORN) to produce L-citrulline. The polypeptide is Ornithine carbamoyltransferase (argF) (Staphylococcus epidermidis (strain ATCC 12228 / FDA PCI 1200)).